We begin with the raw amino-acid sequence, 95 residues long: Alpha-defensin 20 (95 aa).

The N-terminal stretch at 1–19 (MKTLVLLSALVLLAFQVQA) is a signal peptide. Residues 20–58 (DPIQNTDEETNTEEQPGEEDQAVSVSFGDPEGSALHEKS) constitute a propeptide that is removed on maturation. The tract at residues 22 to 57 (IQNTDEETNTEEQPGEEDQAVSVSFGDPEGSALHEK) is disordered. Acidic residues predominate over residues 25 to 40 (TDEETNTEEQPGEEDQ). Disulfide bonds link cysteine 64/cysteine 89, cysteine 66/cysteine 81, and cysteine 71/cysteine 88.

Belongs to the alpha-defensin family.

It localises to the secreted. Functionally, may have microbicidal activities. In Mus musculus (Mouse), this protein is Alpha-defensin 20 (Defa20).